The primary structure comprises 1488 residues: Chromosome partition protein MukB (1488 aa).

34-41 (GGNGAGKS) contributes to the ATP binding site. Coiled coils occupy residues 326–418 (LEAD…QYNQ), 444–472 (LDTF…QTAH), and 509–602 (RHLA…QRAP). Positions 666-783 (PGGAEDQRLN…SLPIFGRAAR (118 aa)) are flexible hinge. Coiled-coil stretches lie at residues 835 to 923 (EAEI…AKLE), 977 to 1116 (EMLS…AKAG), and 1209 to 1265 (VEAI…LQSV). The tract at residues 1049-1074 (ADSGAEERARQRRDELHAQLSNNRSR) is disordered. A compositionally biased stretch (basic and acidic residues) spans 1051 to 1065 (SGAEERARQRRDELH).

The protein belongs to the SMC family. MukB subfamily. Homodimerization via its hinge domain. Binds to DNA via its C-terminal region. Interacts, and probably forms a ternary complex, with MukE and MukF via its C-terminal region. The complex formation is stimulated by calcium or magnesium. Interacts with tubulin-related protein FtsZ.

Its subcellular location is the cytoplasm. It localises to the nucleoid. Its function is as follows. Plays a central role in chromosome condensation, segregation and cell cycle progression. Functions as a homodimer, which is essential for chromosome partition. Involved in negative DNA supercoiling in vivo, and by this means organize and compact chromosomes. May achieve or facilitate chromosome segregation by condensation DNA from both sides of a centrally located replisome during cell division. The polypeptide is Chromosome partition protein MukB (Salmonella typhimurium (strain LT2 / SGSC1412 / ATCC 700720)).